A 213-amino-acid polypeptide reads, in one-letter code: Phycocyanobilin lyase subunit beta (213 aa).

Belongs to the CpcE/RpcE/PecE family. As to quaternary structure, cpcE and CpcF associate to form a lyase.

Its function is as follows. Required for the chromophorylation of the CpcA gene product. This chain is Phycocyanobilin lyase subunit beta (cpcF), found in Thermosynechococcus vestitus (strain NIES-2133 / IAM M-273 / BP-1).